Here is a 211-residue protein sequence, read N- to C-terminus: NADH-quinone oxidoreductase subunit I (211 aa).

The disordered stretch occupies residues 21-41; sequence PTTEQYPEQKKETAPRFHGRH. 4Fe-4S ferredoxin-type domains lie at 43 to 73 and 89 to 118; these read LNRHPDGLEKCVGCELCAWACPADAIYVEGA and RVYQINYLRCILCGLCIEACPTRALTMSND. The [4Fe-4S] cluster site is built by cysteine 53, cysteine 56, cysteine 59, cysteine 63, cysteine 98, cysteine 101, cysteine 104, and cysteine 108. The tract at residues 141-211 is disordered; sequence RAGMESPPHP…AHGAGSERPR (71 aa). Residues 152 to 166 show a composition bias toward basic and acidic residues; it reads RLGESETDYYTRDPD. Residues 179–191 are compositionally biased toward acidic residues; that stretch reads DEADEAGEAGEAG. Residues 192 to 211 are compositionally biased toward basic and acidic residues; the sequence is EAERAADKVPAHGAGSERPR.

This sequence belongs to the complex I 23 kDa subunit family. As to quaternary structure, NDH-1 is composed of 14 different subunits. Subunits NuoA, H, J, K, L, M, N constitute the membrane sector of the complex. The cofactor is [4Fe-4S] cluster.

The protein localises to the cell membrane. It catalyses the reaction a quinone + NADH + 5 H(+)(in) = a quinol + NAD(+) + 4 H(+)(out). Its function is as follows. NDH-1 shuttles electrons from NADH, via FMN and iron-sulfur (Fe-S) centers, to quinones in the respiratory chain. The immediate electron acceptor for the enzyme in this species is believed to be ubiquinone. Couples the redox reaction to proton translocation (for every two electrons transferred, four hydrogen ions are translocated across the cytoplasmic membrane), and thus conserves the redox energy in a proton gradient. This Parafrankia sp. (strain EAN1pec) protein is NADH-quinone oxidoreductase subunit I.